The primary structure comprises 955 residues: 2-oxoglutarate dehydrogenase E1 component (955 aa).

Belongs to the alpha-ketoglutarate dehydrogenase family. In terms of assembly, homodimer. Part of the 2-oxoglutarate dehydrogenase (OGDH) complex composed of E1 (2-oxoglutarate dehydrogenase), E2 (dihydrolipoamide succinyltransferase) and E3 (dihydrolipoamide dehydrogenase); the complex contains multiple copies of the three enzymatic components (E1, E2 and E3). The cofactor is thiamine diphosphate.

It catalyses the reaction N(6)-[(R)-lipoyl]-L-lysyl-[protein] + 2-oxoglutarate + H(+) = N(6)-[(R)-S(8)-succinyldihydrolipoyl]-L-lysyl-[protein] + CO2. Functionally, E1 component of the 2-oxoglutarate dehydrogenase (OGDH) complex which catalyzes the decarboxylation of 2-oxoglutarate, the first step in the conversion of 2-oxoglutarate to succinyl-CoA and CO(2). In Bacillus cereus (strain ATCC 10987 / NRS 248), this protein is 2-oxoglutarate dehydrogenase E1 component.